We begin with the raw amino-acid sequence, 276 residues long: uncharacterized protein (276 aa).

An AB hydrolase-1 domain is found at 20–137 (PVLIFIPGAN…PPINTFLPDS (118 aa)). The tract at residues 57–76 (GESELTEPLPDSASNPDSDY) is disordered.

The protein belongs to the AB hydrolase superfamily.

This is an uncharacterized protein from Staphylococcus aureus (strain N315).